The chain runs to 427 residues: 3-phosphoshikimate 1-carboxyvinyltransferase (427 aa).

Residues K23, S24, and R28 each contribute to the 3-phosphoshikimate site. Phosphoenolpyruvate is bound at residue K23. Phosphoenolpyruvate is bound by residues G97 and R125. Positions 170, 171, 172, 198, 314, 337, and 341 each coordinate 3-phosphoshikimate. Q172 is a binding site for phosphoenolpyruvate. Catalysis depends on D314, which acts as the Proton acceptor. The phosphoenolpyruvate site is built by R345, R387, and K412.

Belongs to the EPSP synthase family. In terms of assembly, monomer.

Its subcellular location is the cytoplasm. It carries out the reaction 3-phosphoshikimate + phosphoenolpyruvate = 5-O-(1-carboxyvinyl)-3-phosphoshikimate + phosphate. The protein operates within metabolic intermediate biosynthesis; chorismate biosynthesis; chorismate from D-erythrose 4-phosphate and phosphoenolpyruvate: step 6/7. In terms of biological role, catalyzes the transfer of the enolpyruvyl moiety of phosphoenolpyruvate (PEP) to the 5-hydroxyl of shikimate-3-phosphate (S3P) to produce enolpyruvyl shikimate-3-phosphate and inorganic phosphate. This Buchnera aphidicola subsp. Acyrthosiphon pisum (strain 5A) protein is 3-phosphoshikimate 1-carboxyvinyltransferase.